The chain runs to 361 residues: DNA polymerase subunit gamma-2, mitochondrial (361 aa).

The transit peptide at 1 to 18 directs the protein to the mitochondrion; the sequence is MSRIQRCFKSLASAGFFR.

As to quaternary structure, component of the DNA polymerase gamma complex consisting of two subunits: the catalytic subunit DNApol-gamma/DNApolG1 and the accessory subunit PolG2/DNApol-gamma35. As to expression, expressed in ovaries (at protein level).

It is found in the mitochondrion. Functionally, as accessory component of the DNA polymerase gamma complex is involved in the replication of mitochondrial DNA. Does not bind DNA. Essential for mitochondrial DNA maintenance and larval development. The protein is DNA polymerase subunit gamma-2, mitochondrial of Drosophila melanogaster (Fruit fly).